A 96-amino-acid polypeptide reads, in one-letter code: Co-chaperonin GroES (96 aa).

Belongs to the GroES chaperonin family. As to quaternary structure, heptamer of 7 subunits arranged in a ring. Interacts with the chaperonin GroEL.

It localises to the cytoplasm. In terms of biological role, together with the chaperonin GroEL, plays an essential role in assisting protein folding. The GroEL-GroES system forms a nano-cage that allows encapsulation of the non-native substrate proteins and provides a physical environment optimized to promote and accelerate protein folding. GroES binds to the apical surface of the GroEL ring, thereby capping the opening of the GroEL channel. This Neisseria gonorrhoeae (strain ATCC 700825 / FA 1090) protein is Co-chaperonin GroES.